The sequence spans 276 residues: Replication protein A 32 kDa subunit-A (276 aa).

Residues 19-31 (GGGGYMQSPGGFG) are compositionally biased toward gly residues. The segment at 19-47 (GGGGYMQSPGGFGSPAPTQGEKKSRSRSQ) is disordered. Positions 77-151 (VTIVGIVRHA…KSVVAFKIAP (75 aa)) form a DNA-binding region, OB.

The protein belongs to the replication factor A protein 2 family. In terms of assembly, component of the replication protein A complex (RPA/RP-A), a heterotrimeric complex composed of RPA1, RPA2 and RPA3. In terms of processing, differentially phosphorylated throughout the cell cycle, becoming phosphorylated at the G1-S transition and dephosphorylated in late mitosis. Phosphorylation increases upon replication fork stalling.

The protein localises to the nucleus. It localises to the PML body. Functionally, as part of the heterotrimeric replication protein A complex (RPA/RP-A), binds and stabilizes single-stranded DNA intermediates, that form during DNA replication or upon DNA stress. It prevents their reannealing and in parallel, recruits and activates different proteins and complexes involved in DNA metabolism. Thereby, it plays an essential role both in DNA replication and the cellular response to DNA damage. The chain is Replication protein A 32 kDa subunit-A (rpa2-a) from Xenopus laevis (African clawed frog).